Here is a 276-residue protein sequence, read N- to C-terminus: 4-deoxy-L-threo-5-hexosulose-uronate ketol-isomerase 2 (276 aa).

Zn(2+)-binding residues include His194, His196, Glu201, and His243.

It belongs to the KduI family. Zn(2+) serves as cofactor.

The catalysed reaction is 5-dehydro-4-deoxy-D-glucuronate = 3-deoxy-D-glycero-2,5-hexodiulosonate. Its pathway is glycan metabolism; pectin degradation; 2-dehydro-3-deoxy-D-gluconate from pectin: step 4/5. Its function is as follows. Catalyzes the isomerization of 5-dehydro-4-deoxy-D-glucuronate to 3-deoxy-D-glycero-2,5-hexodiulosonate. The sequence is that of 4-deoxy-L-threo-5-hexosulose-uronate ketol-isomerase 2 (kduI2) from Enterococcus faecalis (strain ATCC 700802 / V583).